The sequence spans 353 residues: Paraxanthine methyltransferase 2 (353 aa).

Tyr18 provides a ligand contact to S-adenosyl-L-methionine. Residues Tyr18 and 21 to 25 (QSSYQ) each bind substrate. Residues Gly59, 59–60 (GC), Asn65, 99–102 (FNDL), 128–130 (SFF), and 145–147 (SYA) each bind S-adenosyl-L-methionine. A substrate-binding site is contributed by 146–150 (YAFLF). Mg(2+)-binding residues include Asn167, Asp252, and Phe254. Residues Ser301 and Tyr306 each coordinate substrate.

This sequence belongs to the methyltransferase superfamily. SABATH family. As to quaternary structure, homodimer. Mg(2+) serves as cofactor.

This Arabidopsis thaliana (Mouse-ear cress) protein is Paraxanthine methyltransferase 2.